Consider the following 486-residue polypeptide: HTH-type transcriptional regulator PrpR (486 aa).

Positions 22–76 (LRRLRQERGLTQVALAKALDLSTSYVNQLENDQRPITVPVLLLLTERFDLSAQYF) constitute an HTH cro/C1-type domain. Residues 33-52 (QVALAKALDLSTSYVNQLEN) constitute a DNA-binding region (H-T-H motif).

It belongs to the short-chain fatty acyl-CoA assimilation regulator (ScfR) family.

It functions in the pathway organic acid metabolism; propanoate degradation. Its pathway is steroid metabolism; cholesterol metabolism. Functionally, plays a key role in regulating expression of enzymes involved in the catabolism of short chain fatty acids (SCFA) via both the glyoxylate (acetyl degradation route) and the methylcitrate cycle (propionate degradation route). Required for intracellular growth in macrophages and for the assimilation of cholesterol-derived propionate. PrpR acts as a transcriptional activator of prpDC and icl genes when propionate is the main carbon source, and as a ramB repressor. During growth on propionate, PrpR also acts as a transcriptional repressor of dnaA, which encodes the DnaA initiator protein responsible for initiating chromosomal replication. It is possibly involved in the regulation of genes responsible for controlling cholesterol utilization. The polypeptide is HTH-type transcriptional regulator PrpR (Mycobacterium tuberculosis (strain ATCC 25618 / H37Rv)).